The sequence spans 113 residues: MSNDILLQLDKILDARKTESPETSYVASLYEKGLDKILKKVGEEATETVMAAKDAEYTQNNDNLVYEVADLWFHTLILLSHQGLSSTDITNELQKRFGLSGHEEKANRSKNDA.

Belongs to the PRA-PH family.

The protein resides in the cytoplasm. It carries out the reaction 1-(5-phospho-beta-D-ribosyl)-ATP + H2O = 1-(5-phospho-beta-D-ribosyl)-5'-AMP + diphosphate + H(+). The protein operates within amino-acid biosynthesis; L-histidine biosynthesis; L-histidine from 5-phospho-alpha-D-ribose 1-diphosphate: step 2/9. The chain is Phosphoribosyl-ATP pyrophosphatase from Hydrogenovibrio crunogenus (strain DSM 25203 / XCL-2) (Thiomicrospira crunogena).